The following is a 192-amino-acid chain: Na(+)-translocating ferredoxin:NAD(+) oxidoreductase complex subunit A (192 aa).

6 helical membrane passes run 4 to 24, 38 to 58, 71 to 91, 101 to 121, 133 to 153, and 169 to 189; these read IFIM…FLGI, VGMG…TYVV, LQTI…EMII, ALGV…VALI, IFNG…FAGI, and FPIA…FSGM.

The protein belongs to the NqrDE/RnfAE family. The complex is composed of six subunits: RnfA, RnfB, RnfC, RnfD, RnfE and RnfG.

It localises to the cell membrane. It catalyses the reaction 2 reduced [2Fe-2S]-[ferredoxin] + Na(+)(in) + NAD(+) + H(+) = 2 oxidized [2Fe-2S]-[ferredoxin] + Na(+)(out) + NADH. Part of a membrane-bound complex that couples electron transfer with translocation of ions across the membrane. Couples electron transfer from reduced ferredoxin to NAD(+) with electrogenic movement of Na(+) out of the cell. Involved in caffeate respiration. The protein is Na(+)-translocating ferredoxin:NAD(+) oxidoreductase complex subunit A of Acetobacterium woodii (strain ATCC 29683 / DSM 1030 / JCM 2381 / KCTC 1655 / WB1).